A 277-amino-acid polypeptide reads, in one-letter code: Large ribosomal subunit protein uL2c (277 aa).

A disordered region spans residues 223-277 (VVMNPIDHPHGGGEGRAPIGRKKPLTPWGHPALGKRSRKNNKYSDTLILRRRKNS).

It belongs to the universal ribosomal protein uL2 family. In terms of assembly, part of the 50S ribosomal subunit.

The protein resides in the plastid. It is found in the chloroplast. The polypeptide is Large ribosomal subunit protein uL2c (rpl2) (Marchantia polymorpha (Common liverwort)).